The following is a 276-amino-acid chain: Putative pyruvate, phosphate dikinase regulatory protein (276 aa).

151-158 (GISRTSKT) is an ADP binding site.

It belongs to the pyruvate, phosphate/water dikinase regulatory protein family. PDRP subfamily.

The enzyme catalyses N(tele)-phospho-L-histidyl/L-threonyl-[pyruvate, phosphate dikinase] + ADP = N(tele)-phospho-L-histidyl/O-phospho-L-threonyl-[pyruvate, phosphate dikinase] + AMP + H(+). The catalysed reaction is N(tele)-phospho-L-histidyl/O-phospho-L-threonyl-[pyruvate, phosphate dikinase] + phosphate + H(+) = N(tele)-phospho-L-histidyl/L-threonyl-[pyruvate, phosphate dikinase] + diphosphate. Bifunctional serine/threonine kinase and phosphorylase involved in the regulation of the pyruvate, phosphate dikinase (PPDK) by catalyzing its phosphorylation/dephosphorylation. The chain is Putative pyruvate, phosphate dikinase regulatory protein from Streptococcus agalactiae serotype Ia (strain ATCC 27591 / A909 / CDC SS700).